A 360-amino-acid polypeptide reads, in one-letter code: MGETNTAAQPSQEFEKVLADSSTDVASFDAHDKTLLQKLQHFLHSSPAAVPLIVLVLSLIAFGVILGGKFFSAFTMTLILQQVAIVGIVGAAQTLVILTAGIDLSVGAIMVLSSVIMGQFTFRYGFPPALSVICGLGVGALCGYINGTLVARMKLPPFIVTLGMWQIVLASNFLYSANETIRAQDISANASILQFFGQNFRIGNAVFTYGVVVMVLLVCLLWYVLNRTAWGRYVYAVGDDPEAAKLAGVNVTRMLISIYTLSGLICALAGWALIGRIGSVSPTAGQFANIESITAVVIGGISLFGGRGSIMGMLFGALIVGVFSLGLRLMGTDPQWTYLLIGLLIIIAVAIDQWIRKVAA.

9 helical membrane-spanning segments follow: residues 48–68 (AAVP…ILGG), 84–106 (AIVG…DLSV), 125–145 (GFPP…CGYI), 155–175 (LPPF…NFLY), 205–225 (AVFT…WYVL), 254–274 (MLIS…WALI), 284–304 (AGQF…ISLF), 310–330 (IMGM…LRLM), and 335–355 (QWTY…DQWI).

This sequence belongs to the binding-protein-dependent transport system permease family. The complex is composed of two ATP-binding proteins (FrcA), two transmembrane proteins (FrcC) and a solute-binding protein (FrcB).

It localises to the cell inner membrane. Part of the high-affinity ABC transporter complex FrcBCA involved in fructose uptake. Is also a high-affinity transporter for ribose and mannose. Responsible for the translocation of the substrate across the membrane. This chain is Fructose import permease protein FrcC, found in Rhizobium meliloti (Ensifer meliloti).